The sequence spans 306 residues: Acetylglutamate kinase (306 aa).

Substrate-binding positions include 75–76 (GG), Arg97, and Asn197.

The protein belongs to the acetylglutamate kinase family. ArgB subfamily.

The protein localises to the cytoplasm. It carries out the reaction N-acetyl-L-glutamate + ATP = N-acetyl-L-glutamyl 5-phosphate + ADP. It functions in the pathway amino-acid biosynthesis; L-arginine biosynthesis; N(2)-acetyl-L-ornithine from L-glutamate: step 2/4. Functionally, catalyzes the ATP-dependent phosphorylation of N-acetyl-L-glutamate. This chain is Acetylglutamate kinase, found in Streptomyces coelicolor (strain ATCC BAA-471 / A3(2) / M145).